Consider the following 419-residue polypeptide: Gamma-glutamyl phosphate reductase (419 aa).

This sequence belongs to the gamma-glutamyl phosphate reductase family.

It localises to the cytoplasm. It carries out the reaction L-glutamate 5-semialdehyde + phosphate + NADP(+) = L-glutamyl 5-phosphate + NADPH + H(+). The protein operates within amino-acid biosynthesis; L-proline biosynthesis; L-glutamate 5-semialdehyde from L-glutamate: step 2/2. Its function is as follows. Catalyzes the NADPH-dependent reduction of L-glutamate 5-phosphate into L-glutamate 5-semialdehyde and phosphate. The product spontaneously undergoes cyclization to form 1-pyrroline-5-carboxylate. This is Gamma-glutamyl phosphate reductase from Oleidesulfovibrio alaskensis (strain ATCC BAA-1058 / DSM 17464 / G20) (Desulfovibrio alaskensis).